The following is a 189-amino-acid chain: Probable nicotinate-nucleotide adenylyltransferase (189 aa).

Belongs to the NadD family.

The catalysed reaction is nicotinate beta-D-ribonucleotide + ATP + H(+) = deamido-NAD(+) + diphosphate. It functions in the pathway cofactor biosynthesis; NAD(+) biosynthesis; deamido-NAD(+) from nicotinate D-ribonucleotide: step 1/1. Its function is as follows. Catalyzes the reversible adenylation of nicotinate mononucleotide (NaMN) to nicotinic acid adenine dinucleotide (NaAD). The protein is Probable nicotinate-nucleotide adenylyltransferase of Hydrogenobaculum sp. (strain Y04AAS1).